The chain runs to 446 residues: Exodeoxyribonuclease 7 large subunit (446 aa).

This sequence belongs to the XseA family. In terms of assembly, heterooligomer composed of large and small subunits.

The protein localises to the cytoplasm. The catalysed reaction is Exonucleolytic cleavage in either 5'- to 3'- or 3'- to 5'-direction to yield nucleoside 5'-phosphates.. In terms of biological role, bidirectionally degrades single-stranded DNA into large acid-insoluble oligonucleotides, which are then degraded further into small acid-soluble oligonucleotides. The protein is Exodeoxyribonuclease 7 large subunit of Streptococcus thermophilus (strain CNRZ 1066).